The sequence spans 189 residues: Low affinity inorganic phosphate transporter 2 (189 aa).

The Cytoplasmic portion of the chain corresponds to 1-55; the sequence is TARYTALVAKDAKRAAADMGKVLHVEIDPEDAKVERMAKDESNQFGLFSWEFVRR. A helical transmembrane segment spans residues 56–76; sequence HGLHLFGTCSTWFLLDIAFYS. The Extracellular segment spans residues 77–111; that stretch reads QNLFQKDVFTAIGWIPPAKTMNAVQEVYKIARAQT. The chain crosses the membrane as a helical span at residues 112 to 132; it reads LIALCSTVPGYWFTVAFIDII. At 133–134 the chain is on the cytoplasmic side; the sequence is GR. Residues 135–155 traverse the membrane as a helical segment; it reads FAIQLMGFFFMTVFMFAIAIP. Residues 156-165 lie on the Extracellular side of the membrane; it reads YHHWTLQENR. A helical transmembrane segment spans residues 166 to 186; that stretch reads IGFVIMYSLTFFFANFGPNAT. At 187-189 the chain is on the cytoplasmic side; it reads TFV.

Belongs to the major facilitator superfamily. Phosphate:H(+) symporter (TC 2.A.1.9) family.

It is found in the cell membrane. It carries out the reaction phosphate(in) + H(+)(in) = phosphate(out) + H(+)(out). Functionally, low-affinity transporter for external inorganic phosphate (Pi). In Petunia hybrida (Petunia), this protein is Low affinity inorganic phosphate transporter 2.